Here is a 479-residue protein sequence, read N- to C-terminus: Glycerol-3-phosphate acyltransferase RAM2 (479 aa).

4 helical membrane-spanning segments follow: residues 14–34 (YFALVAFEVGGIFRLLFLVLA), 37–57 (LAGLLYYFISESAGIRVLIFA), 215–235 (SPLMALMIILWIPVGFLLACL), and 237–257 (IAAGALLPMPLVYYAFWALGV). The HXXXXD motif signature appears at 284 to 289 (HRTLLD). Asn-448 carries an N-linked (GlcNAc...) asparagine glycan.

The protein belongs to the GPAT/DAPAT family.

Its subcellular location is the membrane. The catalysed reaction is sn-glycerol 3-phosphate + an acyl-CoA = a 1-acyl-sn-glycero-3-phosphate + CoA. The protein operates within lipid metabolism; glycerolipid metabolism. Its function is as follows. Involved in the production of cutin monomers. Esterifies acyl-group from acyl-ACP to the sn-2 position of glycerol-3-phosphate, a step in cutin biosynthesis. Required for colonization of the root by mycorrhizal fungi, and appropriate hyphopodia and arbuscule formation. Cutin monomers act as plant signals that promote colonization by arbuscular mycorrhizal fungi. This signaling function has been recruited by pathogenic oomycetes to facilitate appressoria formation and their own invasion. The sequence is that of Glycerol-3-phosphate acyltransferase RAM2 from Petunia hybrida (Petunia).